A 399-amino-acid polypeptide reads, in one-letter code: NADH-quinone oxidoreductase subunit D 2 (399 aa).

Positions 1–20 are disordered; the sequence is MIASKESNSAATPATSAPTL. Over residues 9–20 the composition is skewed to low complexity; it reads SAATPATSAPTL.

It belongs to the complex I 49 kDa subunit family. As to quaternary structure, NDH-1 is composed of 14 different subunits. Subunits NuoB, C, D, E, F, and G constitute the peripheral sector of the complex.

The protein resides in the cell inner membrane. The catalysed reaction is a quinone + NADH + 5 H(+)(in) = a quinol + NAD(+) + 4 H(+)(out). NDH-1 shuttles electrons from NADH, via FMN and iron-sulfur (Fe-S) centers, to quinones in the respiratory chain. The immediate electron acceptor for the enzyme in this species is believed to be ubiquinone. Couples the redox reaction to proton translocation (for every two electrons transferred, four hydrogen ions are translocated across the cytoplasmic membrane), and thus conserves the redox energy in a proton gradient. In Opitutus terrae (strain DSM 11246 / JCM 15787 / PB90-1), this protein is NADH-quinone oxidoreductase subunit D 2.